Here is a 113-residue protein sequence, read N- to C-terminus: MQPGGQPDMSALLAQAQQMQQQLMAAQQEMAEAEVTGQAGGGLVTATVKGTGEVVGLKIDPKVVDPDDVETLQDLVIGAIEDASNKAQEIAAQKLGPLAGGFGGGGLPGLPGF.

This sequence belongs to the YbaB/EbfC family. As to quaternary structure, homodimer.

It localises to the cytoplasm. The protein resides in the nucleoid. Functionally, binds to DNA and alters its conformation. May be involved in regulation of gene expression, nucleoid organization and DNA protection. The protein is Nucleoid-associated protein RHA1_ro04210 of Rhodococcus jostii (strain RHA1).